The primary structure comprises 470 residues: Acetyl-CoA decarbonylase/synthase complex subunit beta 2 (470 aa).

Cys-189, Cys-192, Cys-278, and Cys-280 together coordinate [Ni-Fe-S] cluster.

It belongs to the CdhC family. Monomer. The ACDS complex is made up of alpha, epsilon, beta, gamma and delta chains with a probable stoichiometry of (alpha(2)epsilon(2))(4)-beta(8)-(gamma(1)delta(1))(8) (Potential). The cofactor is [Ni-Fe-S] cluster.

It carries out the reaction Co(I)-[corrinoid Fe-S protein] + acetyl-CoA + H(+) = methyl-Co(III)-[corrinoid Fe-S protein] + CO + CoA. Its pathway is one-carbon metabolism; methanogenesis from acetate. In terms of biological role, part of a complex that catalyzes the reversible cleavage of acetyl-CoA, allowing growth on acetate as sole source of carbon and energy. The alpha-epsilon complex generates CO from CO(2), while the beta subunit (this protein) combines the CO with CoA and a methyl group to form acetyl-CoA. The methyl group, which is incorporated into acetyl-CoA, is transferred to the beta subunit by a corrinoid iron-sulfur protein (the gamma-delta complex). This is Acetyl-CoA decarbonylase/synthase complex subunit beta 2 (cdhC2) from Methanosarcina acetivorans (strain ATCC 35395 / DSM 2834 / JCM 12185 / C2A).